A 142-amino-acid chain; its full sequence is Universal stress protein C (142 aa).

Belongs to the universal stress protein A family.

It localises to the cytoplasm. Functionally, required for resistance to DNA-damaging agents. This Escherichia coli O6:H1 (strain CFT073 / ATCC 700928 / UPEC) protein is Universal stress protein C (uspC).